The following is a 165-amino-acid chain: Endoribonuclease YbeY (165 aa).

3 residues coordinate Zn(2+): H130, H134, and H140.

The protein belongs to the endoribonuclease YbeY family. It depends on Zn(2+) as a cofactor.

The protein localises to the cytoplasm. In terms of biological role, single strand-specific metallo-endoribonuclease involved in late-stage 70S ribosome quality control and in maturation of the 3' terminus of the 16S rRNA. This is Endoribonuclease YbeY from Streptococcus gordonii (strain Challis / ATCC 35105 / BCRC 15272 / CH1 / DL1 / V288).